We begin with the raw amino-acid sequence, 550 residues long: Protein UshA (550 aa).

The first 25 residues, 1 to 25 (MRFSLSTTAAALAVSLAFAPGWAVA), serve as a signal peptide directing secretion. Positions 41, 43, 84, 116, 217, 252, and 254 each coordinate a divalent metal cation. A disulfide bridge links Cys258 with Cys275. Substrate is bound by residues 375–379 (RSKVR) and 498–504 (FNALGGD).

The protein belongs to the 5'-nucleotidase family. Co(2+) serves as cofactor.

It localises to the periplasm. It carries out the reaction UDP-sugar + H2O = UMP + alpha-D-aldose 1-phosphate.. It catalyses the reaction a ribonucleoside 5'-phosphate + H2O = a ribonucleoside + phosphate. In terms of biological role, degradation of external UDP-glucose to uridine monophosphate and glucose-1-phosphate, which can then be used by the cell. The chain is Protein UshA (ushA) from Yersinia enterocolitica serotype O:8 / biotype 1B (strain NCTC 13174 / 8081).